A 224-amino-acid polypeptide reads, in one-letter code: 7-cyano-7-deazaguanine synthase (224 aa).

8-18 (CSGGLDSTVAA) is an ATP binding site. The Zn(2+) site is built by cysteine 190, cysteine 198, cysteine 201, and cysteine 204.

It belongs to the QueC family. Requires Zn(2+) as cofactor.

It carries out the reaction 7-carboxy-7-deazaguanine + NH4(+) + ATP = 7-cyano-7-deazaguanine + ADP + phosphate + H2O + H(+). The protein operates within purine metabolism; 7-cyano-7-deazaguanine biosynthesis. Its function is as follows. Catalyzes the ATP-dependent conversion of 7-carboxy-7-deazaguanine (CDG) to 7-cyano-7-deazaguanine (preQ(0)). This chain is 7-cyano-7-deazaguanine synthase, found in Methanothrix thermoacetophila (strain DSM 6194 / JCM 14653 / NBRC 101360 / PT) (Methanosaeta thermophila).